The following is a 537-amino-acid chain: Phosphoenolpyruvate carboxykinase (ATP) (537 aa).

3 residues coordinate substrate: Arg-61, Tyr-194, and Lys-200. Residues Lys-200, His-219, and 235–243 contribute to the ATP site; that span reads GLSGTGKTT. Mn(2+)-binding residues include Lys-200 and His-219. Mn(2+) is bound at residue Asp-256. Residues Glu-284, Arg-322, and Thr-448 each coordinate ATP. Arg-322 contributes to the substrate binding site.

Belongs to the phosphoenolpyruvate carboxykinase (ATP) family. Requires Mn(2+) as cofactor.

Its subcellular location is the cytoplasm. The enzyme catalyses oxaloacetate + ATP = phosphoenolpyruvate + ADP + CO2. It functions in the pathway carbohydrate biosynthesis; gluconeogenesis. Its function is as follows. Involved in the gluconeogenesis. Catalyzes the conversion of oxaloacetate (OAA) to phosphoenolpyruvate (PEP) through direct phosphoryl transfer between the nucleoside triphosphate and OAA. The polypeptide is Phosphoenolpyruvate carboxykinase (ATP) (Bradyrhizobium sp. (strain BTAi1 / ATCC BAA-1182)).